Reading from the N-terminus, the 149-residue chain is Prefoldin subunit alpha (149 aa).

Belongs to the prefoldin subunit alpha family. In terms of assembly, heterohexamer of two alpha and four beta subunits.

The protein resides in the cytoplasm. Its function is as follows. Molecular chaperone capable of stabilizing a range of proteins. Seems to fulfill an ATP-independent, HSP70-like function in archaeal de novo protein folding. The polypeptide is Prefoldin subunit alpha (Methanospirillum hungatei JF-1 (strain ATCC 27890 / DSM 864 / NBRC 100397 / JF-1)).